Reading from the N-terminus, the 354-residue chain is UDP-N-acetylglucosamine--N-acetylmuramyl-(pentapeptide) pyrophosphoryl-undecaprenol N-acetylglucosamine transferase (354 aa).

UDP-N-acetyl-alpha-D-glucosamine contacts are provided by residues 13 to 15 (SGG), N125, S189, I242, 261 to 266 (ALTVSE), and Q286.

The protein belongs to the glycosyltransferase 28 family. MurG subfamily.

Its subcellular location is the cell inner membrane. The catalysed reaction is di-trans,octa-cis-undecaprenyl diphospho-N-acetyl-alpha-D-muramoyl-L-alanyl-D-glutamyl-meso-2,6-diaminopimeloyl-D-alanyl-D-alanine + UDP-N-acetyl-alpha-D-glucosamine = di-trans,octa-cis-undecaprenyl diphospho-[N-acetyl-alpha-D-glucosaminyl-(1-&gt;4)]-N-acetyl-alpha-D-muramoyl-L-alanyl-D-glutamyl-meso-2,6-diaminopimeloyl-D-alanyl-D-alanine + UDP + H(+). It participates in cell wall biogenesis; peptidoglycan biosynthesis. In terms of biological role, cell wall formation. Catalyzes the transfer of a GlcNAc subunit on undecaprenyl-pyrophosphoryl-MurNAc-pentapeptide (lipid intermediate I) to form undecaprenyl-pyrophosphoryl-MurNAc-(pentapeptide)GlcNAc (lipid intermediate II). The sequence is that of UDP-N-acetylglucosamine--N-acetylmuramyl-(pentapeptide) pyrophosphoryl-undecaprenol N-acetylglucosamine transferase from Buchnera aphidicola subsp. Acyrthosiphon pisum (strain APS) (Acyrthosiphon pisum symbiotic bacterium).